Consider the following 283-residue polypeptide: NAD kinase (283 aa).

Aspartate 61 (proton acceptor) is an active-site residue. NAD(+) contacts are provided by residues 61–62, 134–135, arginine 145, aspartate 164, 175–180, and glutamine 234; these read DG, ND, and TAYNLS.

The protein belongs to the NAD kinase family. The cofactor is a divalent metal cation.

It is found in the cytoplasm. It catalyses the reaction NAD(+) + ATP = ADP + NADP(+) + H(+). Involved in the regulation of the intracellular balance of NAD and NADP, and is a key enzyme in the biosynthesis of NADP. Catalyzes specifically the phosphorylation on 2'-hydroxyl of the adenosine moiety of NAD to yield NADP. The protein is NAD kinase of Clostridium kluyveri (strain NBRC 12016).